A 900-amino-acid chain; its full sequence is MVGMIRGGMGDQNWSRLVFWLILFSGLLVITLEENPEKDEIFLSQFMAPSTGQVNEHMEETSWAQRCWQDSDCVKEAVAEFNLCFPGSKDSRELFGLNHTNLKQTLLDCIQEKGKLNGHNPKYLELLSSMLDIPRRNLATKPGSSPSPSPSRPPKRSRGPPRPPTRPKSPPPRKSSFPPSRSPPPPPAKKNASKNSTSAPVSPAKKKEDHEKTIIIAVVVTAVSTFLLAALFFLCCSRVCGNGSGGRKNDERPLLSLSSSDYSVGSSINYGGSVKGDKQGHQSFNIYSNQGKMSSFDGSNSDTSDSLEERLSHEGLRNNSITNHGLPPLKPPPGRTASVLSGKSFSGKVEPLPPEPPKFLKVSSKKASAPPPPVPAPQMPSSAGPPRPPPPAPPPGSGGPKPPPPPGPKGPRPPPPMSLGPKAPRPPSGPADALDDDAPKTKLKPFFWDKVQANPEHSMVWNDIRSGSFQFNEEMIESLFGYAAADKNKNDKKGSSGQAALPQFVQILEPKKGQNLSILLRALNATTEEVCDALREGNELPVEFIQTLLKMAPTPEEELKLRLYCGEIAQLGSAERFLKAVVDIPFAFKRLEALLFMCTLHEEMAFVKESFQKLEVACKELRGSRLFLKLLEAVLKTGNRMNDGTFRGGAQAFKLDTLLKLADVKGTDGKTTLLHFVVQEIIRTEGVRAARTIRESQSFSSVKTEDLLVEETSEESEENYRNLGLEKVSGLSSELEHVKKSANIDADGLTGTVLKMGHALSKARDFVNSEMKSSGEESGFREALEDFIQNAEGSIMSILEEEKRIMALVKSTGDYFHGKAGKDEGLRLFVIVRDFLIILDKSCKEVREARGRPVRMARKQGSTASASSETPRQTPSLDPRQKLFPAITERRVDQSSSDSD.

The helical; Signal-anchor transmembrane segment at 15–32 (SRLVFWLILFSGLLVITL) threads the bilayer. The disordered stretch occupies residues 136-209 (RNLATKPGSS…PVSPAKKKED (74 aa)). Residues 160–173 (PPRPPTRPKSPPPR) are compositionally biased toward pro residues. The helical transmembrane segment at 214-234 (IIIAVVVTAVSTFLLAALFFL) threads the bilayer. Disordered stretches follow at residues 273 to 440 (SVKG…DAPK) and 849 to 900 (ARGR…SDSD). Residues 281–304 (HQSFNIYSNQGKMSSFDGSNSDTS) show a composition bias toward polar residues. A compositionally biased stretch (basic and acidic residues) spans 307 to 316 (LEERLSHEGL). Residues 359-368 (FLKVSSKKAS) are compositionally biased toward low complexity. The span at 369-429 (APPPPVPAPQ…GPKAPRPPSG (61 aa)) shows a compositional bias: pro residues. The 433-residue stretch at 433–865 (ALDDDAPKTK…MARKQGSTAS (433 aa)) folds into the FH2 domain. Positions 860 to 876 (QGSTASASSETPRQTPS) are enriched in polar residues.

Belongs to the formin-like family. Class-I subfamily. Expressed in the endosperm. Localizes to the cell plate, a plant-specific membranous component that is assembled at the plane of cell division.

It localises to the membrane. Functionally, might be involved in the organization and polarity of the actin cytoskeleton. Interacts with the barbed end of actin filaments and nucleates actin-filament polymerization in vitro. Seems to play a role in cytokinesis. The protein is Formin-like protein 5 (FH5) of Arabidopsis thaliana (Mouse-ear cress).